A 485-amino-acid chain; its full sequence is Glutamyl-tRNA(Gln) amidotransferase subunit A 1 (485 aa).

Catalysis depends on charge relay system residues Lys79 and Ser154. Residue Ser178 is the Acyl-ester intermediate of the active site.

Belongs to the amidase family. GatA subfamily. As to quaternary structure, heterotrimer of A, B and C subunits.

The catalysed reaction is L-glutamyl-tRNA(Gln) + L-glutamine + ATP + H2O = L-glutaminyl-tRNA(Gln) + L-glutamate + ADP + phosphate + H(+). Functionally, allows the formation of correctly charged Gln-tRNA(Gln) through the transamidation of misacylated Glu-tRNA(Gln) in organisms which lack glutaminyl-tRNA synthetase. The reaction takes place in the presence of glutamine and ATP through an activated gamma-phospho-Glu-tRNA(Gln). The polypeptide is Glutamyl-tRNA(Gln) amidotransferase subunit A 1 (gatA1) (Clostridium acetobutylicum (strain ATCC 824 / DSM 792 / JCM 1419 / IAM 19013 / LMG 5710 / NBRC 13948 / NRRL B-527 / VKM B-1787 / 2291 / W)).